The sequence spans 444 residues: Putative zinc metalloprotease XF_1047 (444 aa).

Zn(2+) is bound at residue histidine 22. Glutamate 23 is an active-site residue. Position 26 (histidine 26) interacts with Zn(2+). Residues 98–120 (IAIVAAGPLANLLLCMLLLWVLF) traverse the membrane as a helical segment. The region spanning 192 to 276 (TLELSKLKQP…DGHPGMIEIR (85 aa)) is the PDZ domain. The next 2 helical transmembrane spans lie at 371-393 (VGWFIYFLSLLSLSLAIINLFPI) and 418-440 (AMAAGQYIGLALLAGLMGLAFYN).

Belongs to the peptidase M50B family. The cofactor is Zn(2+).

The protein resides in the cell inner membrane. The polypeptide is Putative zinc metalloprotease XF_1047 (Xylella fastidiosa (strain 9a5c)).